The following is a 131-amino-acid chain: Single-stranded DNA-binding protein 2 (131 aa).

The 103-residue stretch at 1–103 folds into the SSB domain; the sequence is MYNKVIMIGR…VLASSFQLLE (103 aa). The Important for interaction with partner proteins motif lies at 126-131; sequence EEELPF.

Homotetramer.

Plays an important role in DNA replication, recombination and repair. Binds to ssDNA and to an array of partner proteins to recruit them to their sites of action during DNA metabolism. This is Single-stranded DNA-binding protein 2 (ssb2) from Streptococcus agalactiae serotype III (strain NEM316).